Reading from the N-terminus, the 412-residue chain is Serine hydroxymethyltransferase (412 aa).

(6S)-5,6,7,8-tetrahydrofolate is bound by residues Leu-117 and 121–123; that span reads GHL. Position 226 is an N6-(pyridoxal phosphate)lysine (Lys-226).

It belongs to the SHMT family. Homodimer. Pyridoxal 5'-phosphate serves as cofactor.

It localises to the cytoplasm. It carries out the reaction (6R)-5,10-methylene-5,6,7,8-tetrahydrofolate + glycine + H2O = (6S)-5,6,7,8-tetrahydrofolate + L-serine. The protein operates within one-carbon metabolism; tetrahydrofolate interconversion. It participates in amino-acid biosynthesis; glycine biosynthesis; glycine from L-serine: step 1/1. Its function is as follows. Catalyzes the reversible interconversion of serine and glycine with tetrahydrofolate (THF) serving as the one-carbon carrier. This reaction serves as the major source of one-carbon groups required for the biosynthesis of purines, thymidylate, methionine, and other important biomolecules. Also exhibits THF-independent aldolase activity toward beta-hydroxyamino acids, producing glycine and aldehydes, via a retro-aldol mechanism. The protein is Serine hydroxymethyltransferase of Symbiobacterium thermophilum (strain DSM 24528 / JCM 14929 / IAM 14863 / T).